Here is a 717-residue protein sequence, read N- to C-terminus: Delta-1-pyrroline-5-carboxylate synthase A (717 aa).

Positions 1–296 (MEELDRSRAF…WAPITDSNAR (296 aa)) are glutamate 5-kinase. Residues Ser60, Asp157, and Asn176 each coordinate substrate. Residues 196-197 (SD) and 236-242 (RGGMTAK) contribute to the ATP site. The interval 297 to 717 (DMAVAARESS…YTHQDIPIQA (421 aa)) is gamma-glutamyl phosphate reductase.

It in the N-terminal section; belongs to the glutamate 5-kinase family. This sequence in the C-terminal section; belongs to the gamma-glutamyl phosphate reductase family.

It catalyses the reaction L-glutamate + ATP = L-glutamyl 5-phosphate + ADP. The catalysed reaction is L-glutamate 5-semialdehyde + phosphate + NADP(+) = L-glutamyl 5-phosphate + NADPH + H(+). It functions in the pathway amino-acid biosynthesis; L-proline biosynthesis; L-glutamate 5-semialdehyde from L-glutamate: step 1/2. The protein operates within amino-acid biosynthesis; L-proline biosynthesis; L-glutamate 5-semialdehyde from L-glutamate: step 2/2. In terms of biological role, P5CS plays a key role in proline biosynthesis, leading to osmoregulation in plants. The sequence is that of Delta-1-pyrroline-5-carboxylate synthase A (P5CSA) from Arabidopsis thaliana (Mouse-ear cress).